The sequence spans 65 residues: Large ribosomal subunit protein bL35 (65 aa).

The tract at residues 1-26 (MPKMKTHRGAAKRFRKTGTGKLKRGK) is disordered.

The protein belongs to the bacterial ribosomal protein bL35 family.

This chain is Large ribosomal subunit protein bL35, found in Clostridium beijerinckii (strain ATCC 51743 / NCIMB 8052) (Clostridium acetobutylicum).